The chain runs to 449 residues: UNC93-like protein MFSD11 (449 aa).

Residues 8–28 (LFNIIILGVAFMFMFTAFQTC) form a helical membrane-spanning segment. Asn-40 is a glycosylation site (N-linked (GlcNAc...) asparagine). 5 consecutive transmembrane segments (helical) span residues 53-73 (AIIY…VAIV), 74-94 (GPQL…AVFI), 96-116 (PFPW…AVLW), 138-158 (IFWA…YFAW), and 170-190 (RTVF…FFLI). Ser-204 carries the phosphoserine modification. 6 helical membrane passes run 239-259 (MLLL…FSGV), 277-297 (LIGL…SLFG), 309-329 (PVVL…FLNM), 359-379 (FLLG…LGFL), 385-405 (APAF…AFFY), and 410-430 (LLHW…ISFF).

The protein belongs to the unc-93 family.

Its subcellular location is the membrane. This Macaca fascicularis (Crab-eating macaque) protein is UNC93-like protein MFSD11 (MFSD11).